The sequence spans 266 residues: Adaptin ear-binding coat-associated protein 2 (266 aa).

Disordered stretches follow at residues S164–P191 and G244–F266. S181 bears the Phosphoserine mark. The short motif at W243–F246 is the WXXF motif 1 element. Residues T247–Q258 are compositionally biased toward low complexity. The short motif at W263–F266 is the WXXF motif 2 element.

It belongs to the NECAP family. As to quaternary structure, interacts with AP1G1 and AP2A1 components of the adapter protein complexes AP-1 and AP-2. Interacts with the GAE domain proteins GGA1, GGA2 and GGA3.

It localises to the cytoplasmic vesicle. The protein localises to the clathrin-coated vesicle membrane. Its subcellular location is the cell membrane. In terms of biological role, involved in endocytosis. The protein is Adaptin ear-binding coat-associated protein 2 (NECAP2) of Bos taurus (Bovine).